Reading from the N-terminus, the 353-residue chain is Protein-arginine kinase (353 aa).

Residues Ile-24–Ala-256 enclose the Phosphagen kinase C-terminal domain. Residues Ser-27 to Arg-31, His-93, Arg-127, Arg-178 to Met-182, and Arg-209 to Glu-214 each bind ATP. The RDXXRA motif of the pArg binding pocket involved in allosteric regulation signature appears at Arg-339 to Ala-344.

This sequence belongs to the ATP:guanido phosphotransferase family.

It catalyses the reaction L-arginyl-[protein] + ATP = N(omega)-phospho-L-arginyl-[protein] + ADP + H(+). With respect to regulation, appears to be allosterically activated by the binding of pArg-containing polypeptides to the pArg-binding pocket localized in the C-terminal domain of McsB. Catalyzes the specific phosphorylation of arginine residues in proteins. The protein is Protein-arginine kinase of Symbiobacterium thermophilum (strain DSM 24528 / JCM 14929 / IAM 14863 / T).